The sequence spans 213 residues: Endonuclease III (213 aa).

In terms of domain architecture, HhH spans 108–127 (FKELIKLPGVGRKTANVVLN). Cys187, Cys194, Cys197, and Cys203 together coordinate [4Fe-4S] cluster.

It belongs to the Nth/MutY family. [4Fe-4S] cluster serves as cofactor.

It catalyses the reaction 2'-deoxyribonucleotide-(2'-deoxyribose 5'-phosphate)-2'-deoxyribonucleotide-DNA = a 3'-end 2'-deoxyribonucleotide-(2,3-dehydro-2,3-deoxyribose 5'-phosphate)-DNA + a 5'-end 5'-phospho-2'-deoxyribonucleoside-DNA + H(+). In terms of biological role, DNA repair enzyme that has both DNA N-glycosylase activity and AP-lyase activity. The DNA N-glycosylase activity releases various damaged pyrimidines from DNA by cleaving the N-glycosidic bond, leaving an AP (apurinic/apyrimidinic) site. The AP-lyase activity cleaves the phosphodiester bond 3' to the AP site by a beta-elimination, leaving a 3'-terminal unsaturated sugar and a product with a terminal 5'-phosphate. In Rickettsia felis (strain ATCC VR-1525 / URRWXCal2) (Rickettsia azadi), this protein is Endonuclease III.